A 205-amino-acid chain; its full sequence is Spermatogenesis-associated protein 24 (205 aa).

Residues 17-166 are a coiled coil; that stretch reads LAFDQLRDVI…QQRQSFRNHM (150 aa). The interval 138 to 185 is required for interaction with CBX5 and TBPL1; sequence EDILNGKENEIKELQQVISQQRQSFRNHMSDFRIQKQQETYMAQVLDQ. The tract at residues 182 to 205 is disordered; it reads VLDQKHKKTSGTRRARSRQCSREK. A compositionally biased stretch (basic residues) spans 186–205; it reads KHKKTSGTRRARSRQCSREK.

It belongs to the SPATA24 family. In terms of assembly, homodimer. Interacts with CBX3, CBX5, GMNN, GTF2B, TBPL1 and the polycomb proteins PHCF2, RNF2 and SCMH1 but not with CBX1 or PCGF2. Highly expressed in the testis and is mainly localized in the spermatids. Also expressed in the lung, heart, spleen and epididymis.

Its subcellular location is the cytoplasm. It localises to the nucleus. The protein resides in the nucleolus. It is found in the nucleoplasm. Functionally, binds DNA with high affinity but does not bind to TATA boxes. Synergises with GMNN and TBP in activation of TATA box-containing promoters and with GMNN and TBPL1 in activation of the NF1 TATA-less promoter. May play a role in cytoplasm movement and removal during spermiogenesis. The chain is Spermatogenesis-associated protein 24 (Spata24) from Rattus norvegicus (Rat).